The sequence spans 178 residues: Cytochrome b6-f complex iron-sulfur subunit (178 aa).

The helical transmembrane segment at 20-42 (LLTFGTVTGVALGALYPVAQYFT) threads the bilayer. In terms of domain architecture, Rieske spans 71 to 161 (THPVGDRSLV…VSIEDDQVLV (91 aa)). Residues Cys107, His109, Cys125, and His128 each contribute to the [2Fe-2S] cluster site. Residues Cys112 and Cys127 are joined by a disulfide bond.

It belongs to the Rieske iron-sulfur protein family. In terms of assembly, the 4 large subunits of the cytochrome b6-f complex are cytochrome b6, subunit IV (17 kDa polypeptide, PetD), cytochrome f and the Rieske protein, while the 4 small subunits are PetG, PetL, PetM and PetN. The complex functions as a dimer. [2Fe-2S] cluster is required as a cofactor.

The protein resides in the cellular thylakoid membrane. The enzyme catalyses 2 oxidized [plastocyanin] + a plastoquinol + 2 H(+)(in) = 2 reduced [plastocyanin] + a plastoquinone + 4 H(+)(out). Component of the cytochrome b6-f complex, which mediates electron transfer between photosystem II (PSII) and photosystem I (PSI), cyclic electron flow around PSI, and state transitions. The sequence is that of Cytochrome b6-f complex iron-sulfur subunit from Prochlorococcus marinus (strain NATL1A).